The chain runs to 107 residues: Period circadian protein (107 aa).

The segment at 81–107 (ITNGSNTGTGTSSGSFQPPLLTEALLN) is disordered. Low complexity predominate over residues 82 to 95 (TNGSNTGTGTSSGS).

Forms a heterodimer with timeless (TIM); the complex then translocates into the nucleus. In terms of processing, phosphorylated with a circadian rhythmicity, probably by the double-time protein (dbt). Phosphorylation could be implicated in the stability of per monomer and in the formation of heterodimer per-tim.

The protein localises to the nucleus. It localises to the cytoplasm. Its subcellular location is the perinuclear region. Functionally, essential for biological clock functions. Determines the period length of circadian and ultradian rhythms; an increase in PER dosage leads to shortened circadian rhythms and a decrease leads to lengthened circadian rhythms. Essential for the circadian rhythmicity of locomotor activity, eclosion behavior, and for the rhythmic component of the male courtship song that originates in the thoracic nervous system. The biological cycle depends on the rhythmic formation and nuclear localization of the TIM-PER complex. Light induces the degradation of TIM, which promotes elimination of PER. Nuclear activity of the heterodimer coordinatively regulates PER and TIM transcription through a negative feedback loop. Behaves as a negative element in circadian transcriptional loop. Does not appear to bind DNA, suggesting indirect transcriptional inhibition. This Beris vallata (Common orange legionnaire) protein is Period circadian protein (per).